The sequence spans 122 residues: Large ribosomal subunit protein uL14 (122 aa).

It belongs to the universal ribosomal protein uL14 family. In terms of assembly, part of the 50S ribosomal subunit. Forms a cluster with proteins L3 and L19. In the 70S ribosome, L14 and L19 interact and together make contacts with the 16S rRNA in bridges B5 and B8.

Its function is as follows. Binds to 23S rRNA. Forms part of two intersubunit bridges in the 70S ribosome. The protein is Large ribosomal subunit protein uL14 of Lactobacillus delbrueckii subsp. bulgaricus (strain ATCC 11842 / DSM 20081 / BCRC 10696 / JCM 1002 / NBRC 13953 / NCIMB 11778 / NCTC 12712 / WDCM 00102 / Lb 14).